Here is a 254-residue protein sequence, read N- to C-terminus: HLA class II histocompatibility antigen, DR alpha chain (254 aa).

A signal peptide spans 1–25 (MAISGVPVLGFFIIAVLMSAQESWA). Residues 26–109 (IKEEHVIIQA…KRSNYTPITN (84 aa)) are alpha-1. The Extracellular portion of the chain corresponds to 26–216 (IKEEHVIIQA…APSPLPETTE (191 aa)). N-linked (GlcNAc...) asparagine glycans are attached at residues N103 and N143. The interval 110–203 (VPPEVTVLTN…GLDEPLLKHW (94 aa)) is alpha-2. The 93-residue stretch at 112-204 (PEVTVLTNSP…LDEPLLKHWE (93 aa)) folds into the Ig-like C1-type domain. C132 and C188 form a disulfide bridge. The interval 204–216 (EFDAPSPLPETTE) is connecting peptide. The helical transmembrane segment at 217–239 (NVVCALGLTVGLVGIIIGTIFII) threads the bilayer. Topologically, residues 240–254 (KGLRKSNAAERRGPL) are cytoplasmic. A Glycyl lysine isopeptide (Lys-Gly) (interchain with G-Cter in ubiquitin) cross-link involves residue K244.

It belongs to the MHC class II family. As to quaternary structure, heterotrimer that consists of an alpha chain HLA-DRA, a beta chain HLA-DRB and a peptide (peptide-MHCII). Newly synthesized alpha and beta chains forms a heterodimer (MHCII) that associates with the CD74/invariant chain (Ii) in the endoplasmic reticulum (ER). Ii is a trimer composed of three subunits and each subunit interacts with one MHCII dimer, blocking the peptide-binding cleft. As a result, MHCII molecules cannot bind peptides present in the ER. The complex of MHCII and CD74/Ii is transported in vesicles from ER to Golgi to lysosomes, where it encounters antigenic peptides generated via proteolysis of endocytosed antigens. MHCII dimers are dissociated from CD74/Ii by the combined action of proteolysis and HLA-DM. Lysosomal enzymes such as cathepsin, degrade CD74/Ii leaving a 24 amino acid remnant called class II-associated Ii or CLIP. Interacts (via the peptide binding cleft) with CLIP; this interaction inhibits antigen peptide binding before entry in the endosomal compartment. The displacement of CLIP and replacement by a high affinity peptide in lysosomes is performed by HLA-DM heterodimer. HLA-DM catalyzes CLIP dissociation from MHCII, stabilizes empty MHCII and mediates the selection of high affinity peptides. Interacts with HLA-DM heterodimer; this interaction is direct. Interacts (via alpha-1 domain) with TCR (via CDRs). Interacts (via alpha-2 domain) with CD4 (via Ig-like V-type domain); this interaction increases the affinity of TCR for peptide-MHCII. (Microbial infection) Interacts with Epstein-Barr virus BZLF2/gp42. In terms of assembly, (Microbial infection) Interacts with Staphylococcus aureus enterotoxin A/entA, enterotoxin B/entB, enterotoxin C1/entC1, enterotoxin D/entD, and enterotoxin H/entH. Ubiquitinated by MARCHF1 or MARCHF8 at Lys-244 leading to down-regulation of MHCII. When associated with ubiquitination of the beta chain at 'Lys-254', the down-regulation of MHCII may be highly effective. Expressed in professional APCs: macrophages, dendritic cells and B cells (at protein level). Expressed in thymic epithelial cells (at protein level).

The protein resides in the cell membrane. Its subcellular location is the endoplasmic reticulum membrane. The protein localises to the early endosome membrane. It localises to the late endosome membrane. It is found in the lysosome membrane. The protein resides in the autolysosome membrane. Functionally, an alpha chain of antigen-presenting major histocompatibility complex class II (MHCII) molecule. In complex with the beta chain HLA-DRB, displays antigenic peptides on professional antigen presenting cells (APCs) for recognition by alpha-beta T cell receptor (TCR) on HLA-DR-restricted CD4-positive T cells. This guides antigen-specific T-helper effector functions, both antibody-mediated immune response and macrophage activation, to ultimately eliminate the infectious agents and transformed cells. Typically presents extracellular peptide antigens of 10 to 30 amino acids that arise from proteolysis of endocytosed antigens in lysosomes. In the tumor microenvironment, presents antigenic peptides that are primarily generated in tumor-resident APCs likely via phagocytosis of apoptotic tumor cells or macropinocytosis of secreted tumor proteins. Presents peptides derived from intracellular proteins that are trapped in autolysosomes after macroautophagy, a mechanism especially relevant for T cell selection in the thymus and central immune tolerance. The selection of the immunodominant epitopes follows two processing modes: 'bind first, cut/trim later' for pathogen-derived antigenic peptides and 'cut first, bind later' for autoantigens/self-peptides. The anchor residue at position 1 of the peptide N-terminus, usually a large hydrophobic residue, is essential for high affinity interaction with MHCII molecules. The protein is HLA class II histocompatibility antigen, DR alpha chain (HLA-DRA) of Homo sapiens (Human).